The sequence spans 175 residues: MALLEIIHYPSKILRTISKEVVSFDAKFHQQLDDMHETMIASEGIGLAAIQVGLPLRMLLINLPREDGVQHKEDCLEIINPKFIETKGSIMFKEGCLSVPGFYEEVERFEKVKIEYQNRFAKVKVLEASELLAVAIQHEIDHLNGVLFVDKLSILKRKKFEKELKELNKNPKNKS.

Residues cysteine 96 and histidine 138 each coordinate Fe cation. Glutamate 139 is an active-site residue. Histidine 142 serves as a coordination point for Fe cation.

This sequence belongs to the polypeptide deformylase family. Fe(2+) is required as a cofactor.

The catalysed reaction is N-terminal N-formyl-L-methionyl-[peptide] + H2O = N-terminal L-methionyl-[peptide] + formate. Removes the formyl group from the N-terminal Met of newly synthesized proteins. Requires at least a dipeptide for an efficient rate of reaction. N-terminal L-methionine is a prerequisite for activity but the enzyme has broad specificity at other positions. The protein is Peptide deformylase of Helicobacter acinonychis (strain Sheeba).